Reading from the N-terminus, the 190-residue chain is GTP cyclohydrolase 1 (190 aa).

Zn(2+)-binding residues include cysteine 75, histidine 78, and cysteine 146.

This sequence belongs to the GTP cyclohydrolase I family. As to quaternary structure, toroid-shaped homodecamer, composed of two pentamers of five dimers.

It catalyses the reaction GTP + H2O = 7,8-dihydroneopterin 3'-triphosphate + formate + H(+). Its pathway is cofactor biosynthesis; 7,8-dihydroneopterin triphosphate biosynthesis; 7,8-dihydroneopterin triphosphate from GTP: step 1/1. The polypeptide is GTP cyclohydrolase 1 (Campylobacter curvus (strain 525.92)).